A 295-amino-acid polypeptide reads, in one-letter code: Acetylglutamate kinase (295 aa).

Substrate is bound by residues 66–67 (GG), arginine 88, and asparagine 193.

It belongs to the acetylglutamate kinase family. ArgB subfamily.

It is found in the cytoplasm. It catalyses the reaction N-acetyl-L-glutamate + ATP = N-acetyl-L-glutamyl 5-phosphate + ADP. It functions in the pathway amino-acid biosynthesis; L-arginine biosynthesis; N(2)-acetyl-L-ornithine from L-glutamate: step 2/4. Functionally, catalyzes the ATP-dependent phosphorylation of N-acetyl-L-glutamate. This is Acetylglutamate kinase from Rhizobium johnstonii (strain DSM 114642 / LMG 32736 / 3841) (Rhizobium leguminosarum bv. viciae).